A 62-amino-acid chain; its full sequence is Conotoxin Pn-B0151 (62 aa).

The N-terminal stretch at 1-22 (MRCLPVFVILLLLIASTPSVDA) is a signal peptide. A propeptide spanning residues 23–48 (LQKTKDDMPLASFHDNVKRILQTLSN) is cleaved from the precursor.

Belongs to the conotoxin T superfamily. Post-translationally, contains 2 disulfide bonds that can be either 'C1-C3, C2-C4' or 'C1-C4, C2-C3', since these disulfide connectivities have been observed for conotoxins with cysteine framework V (for examples, see AC P0DQQ7 and AC P81755). In terms of tissue distribution, expressed by the venom duct.

Its subcellular location is the secreted. The polypeptide is Conotoxin Pn-B0151 (Conus pennaceus (Feathered cone)).